The chain runs to 311 residues: Transcriptional regulatory protein MoaR1 (311 aa).

The ompR/PhoB-type DNA-binding region spans 15–117 (LNATTAGAVQ…SEPPGYRLLI (103 aa)).

It belongs to the AfsR/DnrI/RedD regulatory family.

Acts as a positive transcriptional regulator of the molybdopterin biosynthesis moa1 locus, promoting the expression of the moaA1B1C1D1 genes. Binds directly to the moaA1 promoter. The chain is Transcriptional regulatory protein MoaR1 (moaR1) from Mycobacterium tuberculosis (strain ATCC 25618 / H37Rv).